The primary structure comprises 351 residues: Prostaglandin reductase 2 (351 aa).

99 to 100 (FY) is a substrate binding site. Residues 165-168 (GACG), Lys192, Tyr208, Asn231, 253-259 (CGQISQY), 287-289 (FLV), and Asn337 contribute to the NADP(+) site. A substrate-binding site is contributed by 288 to 290 (LVL).

It belongs to the NADP-dependent oxidoreductase L4BD family. Monomer.

It is found in the cytoplasm. The enzyme catalyses 13,14-dihydro-15-oxo-prostaglandin E2 + NAD(+) = 15-oxoprostaglandin E2 + NADH + H(+). The catalysed reaction is 13,14-dihydro-15-oxo-prostaglandin E2 + NADP(+) = 15-oxoprostaglandin E2 + NADPH + H(+). It carries out the reaction 13,14-dihydro-15-oxo-PGF2alpha + NADP(+) = 15-oxoprostaglandin F2alpha + NADPH + H(+). It catalyses the reaction 13,14-dihydro-15-oxo-prostaglandin E1 + NADP(+) = 15-oxoprostaglandin E1 + NADPH + H(+). The enzyme catalyses 13,14-dihydro-15-oxo-prostaglandin F1alpha + NADP(+) = 15-oxoprostaglandin F1alpha + NADPH + H(+). Functionally, functions as 15-oxo-prostaglandin 13-reductase and acts on 15-keto-PGE1, 15-keto-PGE2, 15-keto-PGE1-alpha and 15-keto-PGE2-alpha with highest activity towards 15-keto-PGE2. Overexpression represses transcriptional activity of PPARG and inhibits adipocyte differentiation. The protein is Prostaglandin reductase 2 (PTGR2) of Pongo abelii (Sumatran orangutan).